The chain runs to 2332 residues: Phosphatidylinositol phosphatase PTPRQ (2332 aa).

The signal sequence occupies residues 1-35 (MKKVPIKPEQPEKLRAFNISTHSFSLHWSLPSGHV). 18 Fibronectin type-III domains span residues 36 to 99 (ERYQ…TKPG), 100 to 195 (PPVF…TAES), 199 to 294 (KVVN…SSST), 350 to 438 (PPQN…PPDV), 441 to 539 (AVFD…SHPD), 514 to 606 (GLYE…SVRT), 610 to 705 (VPSS…TSED), 710 to 799 (SPQD…TSET), 804 to 894 (APEN…TEED), 899 to 988 (PPQD…TPEG), 993 to 1093 (PPKD…TDQD), 1098 to 1190 (FVGN…TEED), 1192 to 1282 (PETS…TDES), 1287 to 1380 (PPQN…TQES), 1384 to 1470 (VVQN…LPET), 1474 to 1578 (VPTN…TLPG), 1583 to 1681 (PPEN…TLES), and 1686 to 1787 (PPNN…IKAP). Residues 36-1947 (ERYQVDLVPD…GEGLSERTVE (1912 aa)) are Extracellular-facing. The N-linked (GlcNAc...) asparagine glycan is linked to Asn-94. Asn-202 and Asn-394 each carry an N-linked (GlcNAc...) asparagine glycan. N-linked (GlcNAc...) asparagine glycosylation is found at Asn-944, Asn-1038, Asn-1080, and Asn-1101. Residues Asn-1290 and Asn-1295 are each glycosylated (N-linked (GlcNAc...) asparagine). Asn-1844 carries N-linked (GlcNAc...) asparagine glycosylation. Residues 1948 to 1968 (IILSVTLCILSIILLGTAIFA) form a helical membrane-spanning segment. Residues 1969–2332 (FARIRQKQKE…VELEWEETTM (364 aa)) are Cytoplasmic-facing. The 257-residue stretch at 2036–2292 (FQEEFSELPK…IFLHQCILDL (257 aa)) folds into the Tyrosine-protein phosphatase domain. Catalysis depends on Cys-2233, which acts as the Phosphocysteine intermediate.

The protein belongs to the protein-tyrosine phosphatase family. Receptor class 2A subfamily. In terms of assembly, interacts with TPRN. TPRN, CLIC5 and PTPQR form concentric rings at the base of stereocilia and may form a complex. In developing kidney, it localizes to the basal membrane of podocytes, beginning when podocyte progenitors can first be identified in the embryonic kidney (at protein level). Expressed in lung and kidney.

It is found in the cell projection. The protein resides in the stereocilium. It localises to the apical cell membrane. Its subcellular location is the basal cell membrane. The catalysed reaction is a 1,2-diacyl-sn-glycero-3-phospho-(1D-myo-inositol-3,4,5-trisphosphate) + H2O = a 1,2-diacyl-sn-glycero-3-phospho-(1D-myo-inositol-4,5-bisphosphate) + phosphate. The enzyme catalyses a 1,2-diacyl-sn-glycero-3-phospho-(1D-myo-inositol-3,4,5-trisphosphate) + H2O = a 1,2-diacyl-sn-glycero-3-phospho-(1D-myo-inositol-3,4-bisphosphate) + phosphate. It carries out the reaction a 1,2-diacyl-sn-glycero-3-phospho-(1D-myo-inositol-3,5-bisphosphate) + H2O = a 1,2-diacyl-sn-glycero-3-phospho-(1D-myo-inositol-5-phosphate) + phosphate. It catalyses the reaction a 1,2-diacyl-sn-glycero-3-phospho-(1D-myo-inositol-3,5-bisphosphate) + H2O = a 1,2-diacyl-sn-glycero-3-phospho-(1D-myo-inositol-3-phosphate) + phosphate. In terms of biological role, dephosphorylates phosphatidylinositol phosphates, such as phosphatidylinositol 3,4,5-trisphosphate (PIP3) and phosphatidylinositol 3,5-diphosphates, with preference for PIP3. Phosphate can be hydrolyzed from the D3 and D5 positions in the inositol ring. Has low tyrosine-protein phosphatase activity in vitro; however, the relevance of such activity in vivo is unclear. Plays an important role in adipogenesis of mesenchymal stem cells (MSCs). Regulates the phosphorylation state of AKT1 by regulating the levels of PIP3 in MSCs and preadipocyte cells. Required for hair bundle maturation, a process that enables hair cells to detect and transmit sound and balance signals effectively, therefore affecting auditory function. May act by regulating the level of phosphatidylinositol 4,5-bisphosphate (PIP2) level in the basal region of hair bundles. In Homo sapiens (Human), this protein is Phosphatidylinositol phosphatase PTPRQ (PTPRQ).